The chain runs to 289 residues: Oxygen-dependent coproporphyrinogen-III oxidase (289 aa).

A substrate-binding site is contributed by serine 82. Residues histidine 86 and histidine 96 each contribute to the a divalent metal cation site. Histidine 96 acts as the Proton donor in catalysis. Residue 98 to 100 (NYR) participates in substrate binding. A divalent metal cation contacts are provided by histidine 130 and histidine 160. Positions 224-259 (YVEFNLVWDRGTIFGLQTNGRIESILMSMPPLVRWE) are important for dimerization.

This sequence belongs to the aerobic coproporphyrinogen-III oxidase family. As to quaternary structure, homodimer. A divalent metal cation is required as a cofactor.

The protein localises to the cytoplasm. The catalysed reaction is coproporphyrinogen III + O2 + 2 H(+) = protoporphyrinogen IX + 2 CO2 + 2 H2O. It participates in porphyrin-containing compound metabolism; protoporphyrin-IX biosynthesis; protoporphyrinogen-IX from coproporphyrinogen-III (O2 route): step 1/1. In terms of biological role, involved in the heme and chlorophyll biosynthesis. Catalyzes the aerobic oxidative decarboxylation of propionate groups of rings A and B of coproporphyrinogen-III to yield the vinyl groups in protoporphyrinogen-IX. The sequence is that of Oxygen-dependent coproporphyrinogen-III oxidase from Gloeobacter violaceus (strain ATCC 29082 / PCC 7421).